We begin with the raw amino-acid sequence, 262 residues long: Sepiapterin reductase (262 aa).

Residue Met-1 is modified to N-acetylmethionine. 15 to 21 (GASRGFG) provides a ligand contact to NADP(+). A Phosphoserine modification is found at Ser-33. 43-44 (RS) is a binding site for NADP(+). The residue at position 46 (Ser-46) is a Phosphoserine; by CaMK2; in vitro. Residue 70 to 71 (DL) coordinates NADP(+). Residues 158 to 159 (SL) and Tyr-171 each bind substrate. Lys-175 contacts NADP(+). Ser-196 carries the post-translational modification Phosphoserine; by CaMK2; in vitro. Residue Gly-200 participates in substrate binding. 202–207 (LDTNMQ) serves as a coordination point for NADP(+). A Phosphoserine; by CaMK2; in vitro modification is found at Ser-214. Asp-258 lines the substrate pocket.

It belongs to the sepiapterin reductase family. Homodimer. Post-translationally, in vitro phosphorylation of Ser-46, Ser-196 and Ser-214 by CaMK2 does not change kinetic parameters.

The protein resides in the cytoplasm. The catalysed reaction is L-erythro-7,8-dihydrobiopterin + NADP(+) = L-sepiapterin + NADPH + H(+). It carries out the reaction (6R)-L-erythro-5,6,7,8-tetrahydrobiopterin + 2 NADP(+) = 6-pyruvoyl-5,6,7,8-tetrahydropterin + 2 NADPH + 2 H(+). In terms of biological role, catalyzes the final one or two reductions in tetra-hydrobiopterin biosynthesis to form 5,6,7,8-tetrahydrobiopterin. The polypeptide is Sepiapterin reductase (Spr) (Rattus norvegicus (Rat)).